The primary structure comprises 274 residues: Large ribosomal subunit protein uL2cz/uL2cy (274 aa).

2 disordered regions span residues 1–25 (MAIH…VKSN) and 224–274 (NPVD…RRSK).

Belongs to the universal ribosomal protein uL2 family. Part of the 50S ribosomal subunit.

The protein localises to the plastid. Its subcellular location is the chloroplast. The protein is Large ribosomal subunit protein uL2cz/uL2cy (rpl2-A) of Aethionema cordifolium (Lebanon stonecress).